Here is a 391-residue protein sequence, read N- to C-terminus: ATP phosphoribosyltransferase regulatory subunit (391 aa).

Belongs to the class-II aminoacyl-tRNA synthetase family. HisZ subfamily. In terms of assembly, heteromultimer composed of HisG and HisZ subunits.

It is found in the cytoplasm. It participates in amino-acid biosynthesis; L-histidine biosynthesis; L-histidine from 5-phospho-alpha-D-ribose 1-diphosphate: step 1/9. Required for the first step of histidine biosynthesis. May allow the feedback regulation of ATP phosphoribosyltransferase activity by histidine. This is ATP phosphoribosyltransferase regulatory subunit from Clostridium kluyveri (strain ATCC 8527 / DSM 555 / NBRC 12016 / NCIMB 10680 / K1).